A 527-amino-acid chain; its full sequence is Bifunctional purine biosynthesis protein PurH (527 aa).

Residues 1 to 149 (MASDFLPVRR…KNFARVAVAT (149 aa)) enclose the MGS-like domain.

This sequence belongs to the PurH family.

It carries out the reaction (6R)-10-formyltetrahydrofolate + 5-amino-1-(5-phospho-beta-D-ribosyl)imidazole-4-carboxamide = 5-formamido-1-(5-phospho-D-ribosyl)imidazole-4-carboxamide + (6S)-5,6,7,8-tetrahydrofolate. The catalysed reaction is IMP + H2O = 5-formamido-1-(5-phospho-D-ribosyl)imidazole-4-carboxamide. The protein operates within purine metabolism; IMP biosynthesis via de novo pathway; 5-formamido-1-(5-phospho-D-ribosyl)imidazole-4-carboxamide from 5-amino-1-(5-phospho-D-ribosyl)imidazole-4-carboxamide (10-formyl THF route): step 1/1. Its pathway is purine metabolism; IMP biosynthesis via de novo pathway; IMP from 5-formamido-1-(5-phospho-D-ribosyl)imidazole-4-carboxamide: step 1/1. This is Bifunctional purine biosynthesis protein PurH from Xanthomonas oryzae pv. oryzae (strain MAFF 311018).